A 70-amino-acid polypeptide reads, in one-letter code: U-scutigerotoxin(02)-Tl1a (70 aa).

Residues 1–17 form the signal peptide; the sequence is MKYILLGLLLMVVLANA.

This sequence belongs to the scutigerotoxin-02 family. In terms of processing, contains 4 disulfide bonds. In terms of tissue distribution, expressed by the venom gland.

The protein resides in the secreted. The polypeptide is U-scutigerotoxin(02)-Tl1a (Thereuopoda longicornis (Long-legged centipede)).